The chain runs to 231 residues: MSRLLIVVSLSSAFALAGCVAPAPKPNDPYYAPVLPRTPLPAAQNSGAIYQAGFETYLYDDRKAYRVGDIITITLAERTQASKNASSSISKDSSANIGLGSLFGGAVSMANPLTGNSMSLGAEYDASRDTSGSGQAGQSNSLSGSITVTVSEVLPNGILAVRGEKWMTLNTGDELVRIAGLVRQDDIATDNTVSSTRIADARITYSGTGAFADASQPGWLDRFFMSPLWPF.

The N-terminal stretch at 1-18 (MSRLLIVVSLSSAFALAG) is a signal peptide. A lipid anchor (N-palmitoyl cysteine) is attached at cysteine 19. Cysteine 19 is lipidated: S-diacylglycerol cysteine.

Belongs to the FlgH family. In terms of assembly, the basal body constitutes a major portion of the flagellar organelle and consists of four rings (L,P,S, and M) mounted on a central rod.

The protein localises to the cell outer membrane. Its subcellular location is the bacterial flagellum basal body. Its function is as follows. Assembles around the rod to form the L-ring and probably protects the motor/basal body from shearing forces during rotation. The polypeptide is Flagellar L-ring protein (Stutzerimonas stutzeri (strain A1501) (Pseudomonas stutzeri)).